A 342-amino-acid chain; its full sequence is tRNA N6-adenosine threonylcarbamoyltransferase (342 aa).

Residues His120 and His124 each contribute to the Fe cation site. Substrate is bound by residues 142-146 (VVSGG), Asp175, Gly188, Asp192, and Asn281. Asp310 provides a ligand contact to Fe cation.

The protein belongs to the KAE1 / TsaD family. The cofactor is Fe(2+).

Its subcellular location is the cytoplasm. It carries out the reaction L-threonylcarbamoyladenylate + adenosine(37) in tRNA = N(6)-L-threonylcarbamoyladenosine(37) in tRNA + AMP + H(+). Required for the formation of a threonylcarbamoyl group on adenosine at position 37 (t(6)A37) in tRNAs that read codons beginning with adenine. Is involved in the transfer of the threonylcarbamoyl moiety of threonylcarbamoyl-AMP (TC-AMP) to the N6 group of A37, together with TsaE and TsaB. TsaD likely plays a direct catalytic role in this reaction. The protein is tRNA N6-adenosine threonylcarbamoyltransferase of Geobacillus kaustophilus (strain HTA426).